The chain runs to 90 residues: Envelope protein US9 (90 aa).

The Intravirion segment spans residues 1–67 (MTSRLSDPNS…RRRRTRCVGM (67 aa)). The Internalization motif signature appears at 21 to 24 (YPTA). The acidic stretch occupies residues 30–39 (EAYYSESEDE). 2 positions are modified to phosphoserine; by host CK2: S34 and S36. A helical; Signal-anchor for type II membrane protein membrane pass occupies residues 68–88 (VIACLLVAVLSGGFGALLMWL). Topologically, residues 89-90 (LR) are virion surface.

Belongs to the alphaherpesvirinae envelope protein US9 family. Post-translationally, phosphorylated on serines within the acidic cluster, possibly by host CK2. Phosphorylation determines whether endocytosed viral US9 traffics to the trans-Golgi network or recycles to the cell membrane.

It localises to the virion membrane. Its subcellular location is the host Golgi apparatus membrane. The protein resides in the host smooth endoplasmic reticulum membrane. It is found in the host cell membrane. In terms of biological role, essential for the anterograde spread of the infection throughout the host nervous system. Together with the gE/gI heterodimer, US9 is involved in the sorting and transport of viral structural components toward axon tips. The protein is Envelope protein US9 of Homo sapiens (Human).